Reading from the N-terminus, the 142-residue chain is Large ribosomal subunit protein uL13 (142 aa).

Belongs to the universal ribosomal protein uL13 family. Part of the 50S ribosomal subunit.

Functionally, this protein is one of the early assembly proteins of the 50S ribosomal subunit, although it is not seen to bind rRNA by itself. It is important during the early stages of 50S assembly. This chain is Large ribosomal subunit protein uL13, found in Caldicellulosiruptor bescii (strain ATCC BAA-1888 / DSM 6725 / KCTC 15123 / Z-1320) (Anaerocellum thermophilum).